A 693-amino-acid polypeptide reads, in one-letter code: MESKPSRIPRRISVQPSGSLSTRMVSGNRGTSLNDSYHSRDSSFRLDSEYQSASASACASPCQPAWYSESEIPQGARARAQTQQRDHDSKRPKLSCTNCASTSAGRNGGSGLNTVSDSSWRHSQVPRSSSMVLGSFGTDLMRERRDLDRRRESSISNLMDYNHRSGDFTTSSYVQERVPSSYSQGARPKENAVSTLQLNSSSTNHQLPSDHQTVPSSRDSSRSSFRSHFSPRQSESFRNSSHPAFSYFSSRNETPTISNSERGSSQRPYRESSDNEGRRTTRRLLSRIASSMSSTFFSRRSSQDSLNTRSLSSENYISPRTLTSQSRNNGTSSSSDVSEGRAAEASQGFRFLRRRWGLSSLSQNHSSEPEAENFNQESEGRNSGPWLSSSLRNRCTPLFSRRRREGRDESSRMSTSDVPPRSHIFRRDSNEVVHLEAQGDSLGAAANRPQASGASSSAAAGGSTPELPQGGRNPGLTGILPGSLFRFAVPPALGSNLADNVMITVDIIPSGWNSTDGKNDKAKSAPSRDPEKLQKIKESLLLEDSDDEEEGDLCRICQMAAASSSNLLIEPCKCTGSLQYVHQECMKKWLQAKINSGSSLEAVTTCELCKEKLQLNLEDFDIHELHRAHANEQAEYEFISSGLYLVVLLHLCEQSFSDMMGNTIEPSTRVRFINLARTLQAHMEDLETSEDEF.

N-acetylmethionine is present on methionine 1. Disordered stretches follow at residues 1 to 43 (MESK…RDSS), 69 to 136 (ESEI…LGSF), 158 to 281 (LMDY…RRTT), 296 to 342 (FFSR…EGRA), 361 to 430 (LSQN…RDSN), 445 to 475 (AANR…RNPG), and 512 to 533 (WNST…PEKL). 5 stretches are compositionally biased toward polar residues: residues 14–36 (VQPS…LNDS), 95–105 (SCTNCASTSAG), 112–132 (LNTV…SSMV), 167–184 (DFTT…SYSQ), and 192–215 (AVST…QTVP). Residues 216 to 234 (SSRDSSRSSFRSHFSPRQS) are compositionally biased toward low complexity. Positions 236 to 267 (SFRNSSHPAFSYFSSRNETPTISNSERGSSQR) are enriched in polar residues. Over residues 268 to 279 (PYRESSDNEGRR) the composition is skewed to basic and acidic residues. Over residues 296 to 305 (FFSRRSSQDS) the composition is skewed to low complexity. Over residues 306 to 323 (LNTRSLSSENYISPRTLT) the composition is skewed to polar residues. Serine 318 carries the phosphoserine modification. A compositionally biased stretch (low complexity) spans 324–337 (SQSRNNGTSSSSDV). Position 390 is a phosphoserine (serine 390). Low complexity predominate over residues 451–463 (ASGASSSAAAGGS). Residues 517-533 (GKNDKAKSAPSRDPEKL) are compositionally biased toward basic and acidic residues. The segment at 546–616 (DDEEEGDLCR…ELCKEKLQLN (71 aa)) adopts an RING-CH-type zinc-finger fold. Zn(2+) contacts are provided by cysteine 554, cysteine 557, cysteine 572, cysteine 574, histidine 582, cysteine 585, cysteine 606, and cysteine 609. Threonine 688 is subject to Phosphothreonine. Serine 689 bears the Phosphoserine mark.

As to expression, expressed in brain, thymus, muscle and kidney.

The protein resides in the cytoplasm. The enzyme catalyses S-ubiquitinyl-[E2 ubiquitin-conjugating enzyme]-L-cysteine + [acceptor protein]-L-lysine = [E2 ubiquitin-conjugating enzyme]-L-cysteine + N(6)-ubiquitinyl-[acceptor protein]-L-lysine.. It functions in the pathway protein modification; protein ubiquitination. In terms of biological role, E3 ubiquitin-protein ligase which may specifically enhance the E2 activity of HIP2. E3 ubiquitin ligases accept ubiquitin from an E2 ubiquitin-conjugating enzyme in the form of a thioester and then directly transfer the ubiquitin to targeted substrates. May be involved in T-cell proliferation by regulating LIF secretion. May play a role in lysosome homeostasis. Promotes 'Lys-6', 'Lys-11' and 'Lys-63'-linked mixed polyubiquitination on ATG14 leading to the inhibition of autophagy by impairing the interaction between ATG14 and STX7. Participates in the dopamine-mediated negative regulation of the NLRP3 inflammasome by promoting its uibiquitination and subsequent degradation. In Mus musculus (Mouse), this protein is E3 ubiquitin-protein ligase MARCHF7 (Marchf7).